Consider the following 483-residue polypeptide: MKTLNRRDFPGAQYPERIIQFGEGNFLRAFVDWQIDLLNEHTDLNSGVVVVRPIETSFPPSLSTQDGLYTTIIRGLNEKGEAVSDARLIRSVNREISVYSEYDEFLKLAHNPEMRFVFSNTTEAGISYHAGDKFDDAPAVSYPAKLTRLLFERFSHFNGALDKGWIIIPCELIDYNGDALRELVLRYAQEWALPEAFIQWLDQANSFCSTLVDRIVTGYPRDEVAKLEEELGYHDGFLDTAEHFYLFVIQGPKSLATELRLDKYPLNVLIVDDIKPYKERKVAILNGAHTALVPVAFQAGLDTVGEAMNDAEICAFVEKAIYEEIIPVLDLPRDELESFASAVTGRFRNPYIKHQLLSIALNGMTKFRTRILPQLLAGQKANGTLPARLTFALAALIAFYRGERNGETYPVQDDAHWLERYQQLWSQHRDRVIGTQELVAIVLAEKYHWEQDLTQVPGLVEQVANDLDAILEKGMREAVRPLC.

18–29 (IIQFGEGNFLRA) contacts NAD(+).

It belongs to the mannitol dehydrogenase family. UxaB subfamily.

It catalyses the reaction D-altronate + NAD(+) = keto-D-tagaturonate + NADH + H(+). It participates in carbohydrate metabolism; pentose and glucuronate interconversion. The sequence is that of Altronate oxidoreductase from Shigella flexneri serotype 5b (strain 8401).